A 249-amino-acid polypeptide reads, in one-letter code: Probable amino-acid import ATP-binding protein YxeO (249 aa).

The ABC transporter domain occupies 2-239 (ITVKNIRKAF…PKNERTKRFI (238 aa)). 34–41 (GPSGSGKS) contacts ATP.

This sequence belongs to the ABC transporter superfamily. The complex is composed of two ATP-binding proteins (YxeO), two transmembrane proteins (YxeN) and a solute-binding protein (YxeM).

The protein localises to the cell membrane. In terms of biological role, probably part of the ABC transporter complex YxeMNO that could be involved in amino-acid import. May transport S-methylcysteine. Responsible for energy coupling to the transport system. In Bacillus subtilis (strain 168), this protein is Probable amino-acid import ATP-binding protein YxeO (yxeO).